Reading from the N-terminus, the 1037-residue chain is Presequence protease, mitochondrial (1037 aa).

The N-terminal 15 residues, 1–15 (MWRCGGRQGLGVLRR), are a transit peptide targeting the mitochondrion. His-104 contributes to the Zn(2+) binding site. The active-site Proton acceptor is the Glu-107. Zn(2+)-binding residues include His-108 and Glu-205. Cys-119 and Cys-556 are oxidised to a cystine. The residue at position 759 (Lys-759) is an N6-acetyllysine. Residue Lys-770 is modified to N6-acetyllysine; alternate. Lys-770 bears the N6-succinyllysine; alternate mark. The tract at residues 803 to 834 (IGRSKKERRPVRPHTVEKPVPSSSGGDAHVPH) is disordered. Basic residues predominate over residues 804–814 (GRSKKERRPVR). Lys-849 carries the post-translational modification N6-succinyllysine. The residue at position 884 (Lys-884) is an N6-acetyllysine. An N6-succinyllysine modification is found at Lys-946.

This sequence belongs to the peptidase M16 family. PreP subfamily. As to quaternary structure, monomer and homodimer; homodimerization is induced by binding of the substrate. It depends on Zn(2+) as a cofactor. A disulfide bond locks the enzyme in the closed conformation preventing substrate entry into the catalytic chamber.

The protein localises to the mitochondrion matrix. Mainly exists in a closed and catalytically competent conformation but a closed-to-open switch allows substrate entry into the catalytic chamber. Substrate binding induces closure and dimerization. A disulfide bond may lock the enzyme in a closed conformation preventing substrate entry into the catalytic chamber, participating in redox regulation of the enzyme. Inhibited by metal-chelating agents. Inhibited by nickel and zinc excess, and slightly activated by manganese. Metalloendopeptidase of the mitochondrial matrix that functions in peptide cleavage and degradation rather than in protein processing. Has an ATP-independent activity. Specifically cleaves peptides in the range of 5 to 65 residues. Shows a preference for cleavage after small polar residues and before basic residues, but without any positional preference. Degrades the transit peptides of mitochondrial proteins after their cleavage. Also degrades other unstructured peptides. It is also able to degrade amyloid-beta protein 40, one of the peptides produced by APP processing, when it accumulates in mitochondrion. It is a highly efficient protease, at least toward amyloid-beta protein 40. Cleaves that peptide at a specific position and is probably not processive, releasing digested peptides intermediates that can be further cleaved subsequently. It is also able to degrade amyloid-beta protein 42. The sequence is that of Presequence protease, mitochondrial from Pongo abelii (Sumatran orangutan).